The following is a 378-amino-acid chain: 1-acyl-sn-glycerol-3-phosphate acyltransferase delta (378 aa).

A helical membrane pass occupies residues 11–31; sequence FLCHLVFCYVFIASGLIINTI. Positions 96 to 101 match the HXXXXD motif motif; the sequence is HKFEID. Helical transmembrane passes span 125–145, 307–327, and 338–358; these read ELAYVPIIGWMWYFTEMVFCS, TLVNWLFWASLVLYPFFQFLV, and LASFILVFFVASVGVRWMIGV.

The protein belongs to the 1-acyl-sn-glycerol-3-phosphate acyltransferase family. As to expression, widely expressed with highest levels in skeletal muscle, followed by heart, liver, prostate and thymus.

It localises to the endoplasmic reticulum membrane. It carries out the reaction a 1-acyl-sn-glycero-3-phosphate + an acyl-CoA = a 1,2-diacyl-sn-glycero-3-phosphate + CoA. It catalyses the reaction (4Z,7Z,10Z,13Z,16Z,19Z)-docosahexaenoyl-CoA + 1-hexadecanoyl-sn-glycero-3-phosphate = 1-hexadecanoyl-2-(4Z,7Z,10Z,13Z,16Z,19Z-docosahexaenoyl)-sn-glycero-3-phosphate + CoA. The catalysed reaction is 1-octadecanoyl-sn-glycero-3-phosphate + (9Z,12Z)-octadecadienoyl-CoA = 1-octadecanoyl-2-(9Z,12Z-octadecadienoyl)-sn-glycero-3-phosphate + CoA. The enzyme catalyses 1-octadecanoyl-sn-glycero-3-phosphate + (4Z,7Z,10Z,13Z,16Z,19Z)-docosahexaenoyl-CoA = 1-octadecanoyl-2-(4Z,7Z,10Z,13Z,16Z,19Z-docosahexaenoyl)-sn-glycero-3-phosphate + CoA. It carries out the reaction (4Z,7Z,10Z,13Z,16Z,19Z)-docosahexaenoyl-CoA + 1-(9Z-octadecenoyl)-sn-glycero-3-phosphate = 1-(9Z-octadecenoyl)-2-(4Z,7Z,10Z,13Z,16Z,19Z-docosahexaenoyl)-sn-glycero-3-phosphate + CoA. Its pathway is phospholipid metabolism; CDP-diacylglycerol biosynthesis; CDP-diacylglycerol from sn-glycerol 3-phosphate: step 2/3. Its function is as follows. Converts 1-acyl-sn-glycerol-3-phosphate (lysophosphatidic acid or LPA) into 1,2-diacyl-sn-glycerol-3-phosphate (phosphatidic acid or PA) by incorporating an acyl moiety at the sn-2 position of the glycerol backbone. Exhibits high acyl-CoA specificity for polyunsaturated fatty acyl-CoA, especially docosahexaenoyl-CoA (22:6-CoA, DHA-CoA). The chain is 1-acyl-sn-glycerol-3-phosphate acyltransferase delta (AGPAT4) from Homo sapiens (Human).